A 397-amino-acid polypeptide reads, in one-letter code: Anhydro-N-acetylmuramic acid kinase (397 aa).

21-28 (GTSLDGVD) contributes to the ATP binding site. Polar residues predominate over residues 373–384 (TPTNLPSVTGAS). The segment at 373–397 (TPTNLPSVTGASARTPLGSLSVPGP) is disordered.

It belongs to the anhydro-N-acetylmuramic acid kinase family.

The catalysed reaction is 1,6-anhydro-N-acetyl-beta-muramate + ATP + H2O = N-acetyl-D-muramate 6-phosphate + ADP + H(+). The protein operates within amino-sugar metabolism; 1,6-anhydro-N-acetylmuramate degradation. It functions in the pathway cell wall biogenesis; peptidoglycan recycling. In terms of biological role, catalyzes the specific phosphorylation of 1,6-anhydro-N-acetylmuramic acid (anhMurNAc) with the simultaneous cleavage of the 1,6-anhydro ring, generating MurNAc-6-P. Is required for the utilization of anhMurNAc either imported from the medium or derived from its own cell wall murein, and thus plays a role in cell wall recycling. This Salinibacter ruber (strain DSM 13855 / M31) protein is Anhydro-N-acetylmuramic acid kinase.